Consider the following 129-residue polypeptide: uncharacterized protein (129 aa).

Residues 86 to 96 (NDGFSSDDEPE) are compositionally biased toward acidic residues. Residues 86 to 116 (NDGFSSDDEPEEHVILTEDNQGEPSETPQAT) are disordered. Residues 103 to 116 (EDNQGEPSETPQAT) are compositionally biased toward polar residues.

Belongs to the asfivirus D129L family.

This is an uncharacterized protein from African swine fever virus (strain Badajoz 1971 Vero-adapted) (Ba71V).